The chain runs to 230 residues: Putative transcription factor bHLH107 (230 aa).

One can recognise a bHLH domain in the interval 44-93 (ASLRNHKEAERKRRARINSHLNKLRKLLSCNSKTDKSTLLAKVVQRVKEL).

Homodimer.

Its subcellular location is the nucleus. This chain is Putative transcription factor bHLH107 (BHLH107), found in Arabidopsis thaliana (Mouse-ear cress).